Reading from the N-terminus, the 253-residue chain is RBPJ-interacting and tubulin-associated protein 1 (253 aa).

Disordered stretches follow at residues 30-89 (SPAR…KNKY), 127-175 (TPPA…LCVP), and 188-253 (HLTV…PPWK). The span at 71-81 (SPSSRGSTPNL) shows a compositional bias: polar residues. The Nuclear localization signal signature appears at 81 to 97 (LTPRKKNKYRLIGHAPS). The interaction with RBPJ/RBPSUH stretch occupies residues 112-140 (RMAVGDAAKLRTLFWTPPATPRGSHTPCP). The interval 140–253 (PRETPLRAIH…CPPKPKPPWK (114 aa)) is interaction with tubulin. The segment covering 188–228 (HLTVPSTGHPASSAPQTNGPWSPRPNTSGATVQSPLVTSKA) has biased composition (polar residues).

This sequence belongs to the RITA family. As to quaternary structure, interacts with RBPJ/RBPSUH.

The protein localises to the cytoplasm. The protein resides in the nucleus. It is found in the cytoskeleton. Its subcellular location is the microtubule organizing center. It localises to the centrosome. In terms of biological role, tubulin-binding protein that acts as a negative regulator of Notch signaling pathway. Shuttles between the cytoplasm and the nucleus and mediates the nuclear export of RBPJ/RBPSUH, thereby preventing the interaction between RBPJ/RBPSUH and NICD product of Notch proteins (Notch intracellular domain), leading to down-regulate Notch-mediated transcription. May play a role in neurogenesis. This is RBPJ-interacting and tubulin-associated protein 1 (Rita1) from Mus musculus (Mouse).